Consider the following 260-residue polypeptide: NH(3)-dependent NAD(+) synthetase (260 aa).

31 to 38 is a binding site for ATP; it reads GLSGGLDS. Asp37 contacts Mg(2+). Arg112 contributes to the deamido-NAD(+) binding site. Thr132 contributes to the ATP binding site. Glu137 serves as a coordination point for Mg(2+). Residues Lys161 and Ser183 each contribute to the ATP site.

It belongs to the NAD synthetase family. As to quaternary structure, homodimer.

It carries out the reaction deamido-NAD(+) + NH4(+) + ATP = AMP + diphosphate + NAD(+) + H(+). It participates in cofactor biosynthesis; NAD(+) biosynthesis; NAD(+) from deamido-NAD(+) (ammonia route): step 1/1. In terms of biological role, catalyzes the ATP-dependent amidation of deamido-NAD to form NAD. Uses ammonia as a nitrogen source. The protein is NH(3)-dependent NAD(+) synthetase of Helicobacter pylori (strain HPAG1).